The sequence spans 833 residues: Translation initiation factor IF-2 (833 aa).

The region spanning 331-501 is the tr-type G domain; that stretch reads TRAPVVTVMG…LLIAEMQDLK (171 aa). The tract at residues 340–347 is G1; sequence GHVDHGKT. Residue 340 to 347 coordinates GTP; it reads GHVDHGKT. Positions 365-369 are G2; sequence GITQH. A G3 region spans residues 387–390; sequence DTPG. GTP-binding positions include 387-391 and 441-444; these read DTPGH and NKID. The tract at residues 441 to 444 is G4; the sequence is NKID. Positions 477-479 are G5; the sequence is SAL.

Belongs to the TRAFAC class translation factor GTPase superfamily. Classic translation factor GTPase family. IF-2 subfamily.

The protein resides in the cytoplasm. In terms of biological role, one of the essential components for the initiation of protein synthesis. Protects formylmethionyl-tRNA from spontaneous hydrolysis and promotes its binding to the 30S ribosomal subunits. Also involved in the hydrolysis of GTP during the formation of the 70S ribosomal complex. The sequence is that of Translation initiation factor IF-2 from Rickettsia canadensis (strain McKiel).